A 293-amino-acid polypeptide reads, in one-letter code: Bifunctional protein FolD (293 aa).

Residues 169–171 (GRG), Thr-196, and Val-237 each bind NADP(+).

The protein belongs to the tetrahydrofolate dehydrogenase/cyclohydrolase family. As to quaternary structure, homodimer.

The enzyme catalyses (6R)-5,10-methylene-5,6,7,8-tetrahydrofolate + NADP(+) = (6R)-5,10-methenyltetrahydrofolate + NADPH. The catalysed reaction is (6R)-5,10-methenyltetrahydrofolate + H2O = (6R)-10-formyltetrahydrofolate + H(+). Its pathway is one-carbon metabolism; tetrahydrofolate interconversion. Functionally, catalyzes the oxidation of 5,10-methylenetetrahydrofolate to 5,10-methenyltetrahydrofolate and then the hydrolysis of 5,10-methenyltetrahydrofolate to 10-formyltetrahydrofolate. The sequence is that of Bifunctional protein FolD from Leifsonia xyli subsp. xyli (strain CTCB07).